A 434-amino-acid chain; its full sequence is Magnesium transporter MRS2 homolog, mitochondrial (434 aa).

A mitochondrion-targeting transit peptide spans 1–53; sequence MECLRCLPGLLPRAAQPRRALWTAVARLSLAACGGRATPLRSRSPKASSTARA. Residues 54 to 330 are Mitochondrial matrix-facing; the sequence is AGDVLRFRTS…SHRNVMMRLN (277 aa). 5 residues coordinate Mg(2+): Glu-234, Thr-237, Asp-238, Glu-303, and Asp-320. A helical membrane pass occupies residues 331-350; sequence LQLTMGTFSLSLFGLMGVAF. Residues Gly-351 and Asn-353 each contribute to the Mg(2+) site. The GMN motif signature appears at 351 to 353; the sequence is GMN. At 351–361 the chain is on the mitochondrial intermembrane side; that stretch reads GMNLESSLEED. A helical transmembrane segment spans residues 362–392; that stretch reads HRVFWLVTGIMFMGSGLIWRRLLSFLGRQLE. The Mitochondrial matrix segment spans residues 393–434; that stretch reads APVPPVMTSLPKKTLLANRRMDVKNSLRPEGLGASRTILASR.

The protein belongs to the CorA metal ion transporter (MIT) (TC 1.A.35) family. As to quaternary structure, homopentamer. In terms of tissue distribution, ubiquitously expressed.

It is found in the mitochondrion inner membrane. With respect to regulation, may be regulated by calcium ions. Its function is as follows. Magnesium transporter that mediates the influx of magnesium into the mitochondrial matrix and regulates magnesium metabolism. Also permeable to calcium, sodium and potassium ions. Required for normal expression of the mitochondrial respiratory complex I subunits. May play a role in maintaining the inner mitochondrial membrane potential. This is Magnesium transporter MRS2 homolog, mitochondrial (Mrs2) from Mus musculus (Mouse).